A 394-amino-acid chain; its full sequence is RNA demethylase ALKBH5 (394 aa).

Disordered regions lie at residues 1–26 and 48–83; these read MAAA…YKAG and AEPY…EEAR. At alanine 2 the chain carries N-acetylalanine. Lysine 57 participates in a covalent cross-link: Glycyl lysine isopeptide (Lys-Gly) (interchain with G-Cter in ubiquitin). Residues 59–83 are compositionally biased toward basic and acidic residues; it reads KYPEDSDPERSDFEEQQLQKEEEAR. Phosphoserine is present on residues serine 64 and serine 69. Positions 67–116 form a coiled coil; sequence ERSDFEEQQLQKEEEARKVKSGIRQMRLFSQDECAKIEARIDEVVSRAEK. Lysine 86 is covalently cross-linked (Glycyl lysine isopeptide (Lys-Gly) (interchain with G-Cter in SUMO1)). At serine 87 the chain carries Phosphoserine. Lysine 132 carries the N6-acetyllysine modification. Tyrosine 139 is an active-site residue. Asparagine 193, tyrosine 195, and histidine 204 together coordinate 2-oxoglutarate. The cysteines at positions 230 and 267 are disulfide-linked. Lysine 235 is modified (N6-acetyllysine). 2-oxoglutarate is bound by residues histidine 266 and arginine 277. The segment at 298 to 394 is disordered; that stretch reads SSSVLPPSYA…PARKVKMRRH (97 aa). A Glycyl lysine isopeptide (Lys-Gly) (interchain with G-Cter in SUMO1) cross-link involves residue lysine 321. Residue serine 325 is modified to Phosphoserine. Lysine 328 is covalently cross-linked (Glycyl lysine isopeptide (Lys-Gly) (interchain with G-Cter in SUMO2)). Over residues 328–349 the composition is skewed to basic and acidic residues; sequence KADPDAAHRPRILEMDKEENRR. A phosphoserine mark is found at serine 371 and serine 384.

This sequence belongs to the alkB family. Monomer. Interacts with RBM33; promoting desumoylation by SENP1 and recruitment to N(6)-methyladenosine-containing mRNAs. Interacts (when acetylated by KAT8) with PSPC1; interaction facilitates recognition of N(6)-methyladenosine (m6A) mRNA. Fe(2+) is required as a cofactor. Phosphorylated at Ser-87 and Ser-325 in response to reactive oxygen species (ROS), promoting sumoylation and inactivation. In terms of processing, acetylated by KAT8 at Lys-235, promoting interaction with PSPC1, thereby facilitating recognition of N(6)-methyladenosine (m6A) mRNA by ALKBH5. Deacetylated at Lys-235 by HDAC7. Post-translationally, sumoylated at Lys-86 and Lys-321 by PIAS4 following phosphorylation at Ser-87 and Ser-325 in response to reactive oxygen species (ROS), inhibiting the RNA demethylase activity. Desumoylated by SENP1; relieving RNA demethylase inhibition, leading to N(6)-methyladenosine-containing mRNAs demethylation. Ubiquitinated at Lys-57 via 'Lys-48'-linked polyubiquitin chain, leading to its degradation by the proteasome. Deubiquitinated at Lys-57 by USP9X, promoting its stabilizazion.

It localises to the nucleus speckle. It catalyses the reaction an N(6)-methyladenosine in mRNA + 2-oxoglutarate + O2 = an adenosine in mRNA + formaldehyde + succinate + CO2. RNA demethylase activity is inhibited following sumoylation. Inhibition is relieved following desumoylation. In terms of biological role, dioxygenase that specifically demethylates N(6)-methyladenosine (m6A) RNA, the most prevalent internal modification of messenger RNA (mRNA) in higher eukaryotes. Demethylates RNA by oxidative demethylation, which requires molecular oxygen, alpha-ketoglutarate and iron. Demethylation of m6A mRNA affects mRNA processing, translation and export. Can also demethylate N(6)-methyladenosine in single-stranded DNA (in vitro). Required for the late meiotic and haploid phases of spermatogenesis by mediating m6A demethylation in spermatocytes and round spermatids: m6A demethylation of target transcripts is required for correct splicing and the production of longer 3'-UTR mRNAs in male germ cells. Involved in paraspeckle assembly, a nuclear membraneless organelle, by undergoing liquid-liquid phase separation. Paraspeckle assembly is coupled with m6A demethylation of RNAs, such as NEAT1 non-coding RNA. Also acts as a negative regulator of T-cell development: inhibits gamma-delta T-cell proliferation via demethylation of JAG1 and NOTCH2 transcripts. Inhibits regulatory T-cell (Treg) recruitment by mediating demethylation and destabilization of CCL28 mRNAs. This Bos taurus (Bovine) protein is RNA demethylase ALKBH5 (ALKBH5).